The sequence spans 940 residues: Protein translocase subunit SecA (940 aa).

ATP contacts are provided by residues Gln-87, 105–109 (GEGKT), and Asp-494. The interval 879–940 (AQQQKKAVEG…KCHGASEASV (62 aa)) is disordered. Residues 884-898 (KAVEGRATADGKLDE) show a composition bias toward basic and acidic residues. Low complexity predominate over residues 900-915 (SVAAAARPAAASRPAV). The Zn(2+) site is built by Cys-921, Cys-923, Cys-932, and His-933.

It belongs to the SecA family. Monomer and homodimer. Part of the essential Sec protein translocation apparatus which comprises SecA, SecYEG and auxiliary proteins SecDF-YajC and YidC. The cofactor is Zn(2+).

The protein localises to the cell inner membrane. It localises to the cytoplasm. The enzyme catalyses ATP + H2O + cellular proteinSide 1 = ADP + phosphate + cellular proteinSide 2.. Its function is as follows. Part of the Sec protein translocase complex. Interacts with the SecYEG preprotein conducting channel. Has a central role in coupling the hydrolysis of ATP to the transfer of proteins into and across the cell membrane, serving as an ATP-driven molecular motor driving the stepwise translocation of polypeptide chains across the membrane. In Myxococcus xanthus (strain DK1622), this protein is Protein translocase subunit SecA.